Here is a 437-residue protein sequence, read N- to C-terminus: Serine hydroxymethyltransferase (437 aa).

(6S)-5,6,7,8-tetrahydrofolate-binding positions include Leu-130 and 134–136 (GHL). N6-(pyridoxal phosphate)lysine is present on Lys-239.

This sequence belongs to the SHMT family. As to quaternary structure, homodimer. Pyridoxal 5'-phosphate is required as a cofactor.

It localises to the cytoplasm. It carries out the reaction (6R)-5,10-methylene-5,6,7,8-tetrahydrofolate + glycine + H2O = (6S)-5,6,7,8-tetrahydrofolate + L-serine. It participates in one-carbon metabolism; tetrahydrofolate interconversion. Its pathway is amino-acid biosynthesis; glycine biosynthesis; glycine from L-serine: step 1/1. Functionally, catalyzes the reversible interconversion of serine and glycine with tetrahydrofolate (THF) serving as the one-carbon carrier. This reaction serves as the major source of one-carbon groups required for the biosynthesis of purines, thymidylate, methionine, and other important biomolecules. Also exhibits THF-independent aldolase activity toward beta-hydroxyamino acids, producing glycine and aldehydes, via a retro-aldol mechanism. The polypeptide is Serine hydroxymethyltransferase (Bartonella quintana (strain Toulouse) (Rochalimaea quintana)).